Consider the following 880-residue polypeptide: Tyrosine-protein kinase receptor TYRO3 (880 aa).

The first 30 residues, 1–30 (MALRRSMGWPGLRPLLLAGLASLLLPGSAA), serve as a signal peptide directing secretion. Ig-like C2-type domains lie at 31-118 (AGLK…TKIS) and 129-209 (PFFT…PAIV). Residues 31 to 419 (AGLKLMGAPV…QGPPHSRTSW (389 aa)) lie on the Extracellular side of the membrane. N-linked (GlcNAc...) asparagine glycans are attached at residues Asn53, Asn75, Asn181, Asn220, Asn230, Asn283, Asn356, and Asn370. 2 disulfide bridges follow: Cys54-Cys107 and Cys150-Cys193. 2 Fibronectin type-III domains span residues 217–310 (APFN…TKGL) and 315–406 (APQN…SHDH). A helical membrane pass occupies residues 420 to 440 (VPVVLGVLTALITAAALALIL). Residues 441-880 (LRKRRKETRF…QQGLLPHSSC (440 aa)) are Cytoplasmic-facing. Ser456 is subject to Phosphoserine. A Protein kinase domain is found at 508-785 (FTLGRMLGKG…LENILGHLSV (278 aa)). ATP is bound by residues 514-522 (LGKGEFGSV) and Lys540. Residue Asp645 is the Proton acceptor of the active site. Residues Tyr671, Tyr675, Tyr676, and Tyr794 each carry the phosphotyrosine; by autocatalysis modification. Residues 800-864 (AEQPTESGSP…QQPESPLNEN (65 aa)) are disordered. A phosphoserine mark is found at Ser808 and Ser859. The segment covering 849-864 (SPGQLEQQPESPLNEN) has biased composition (polar residues).

Belongs to the protein kinase superfamily. Tyr protein kinase family. AXL/UFO subfamily. In terms of assembly, monomer and homodimer. Interacts (via N-terminus) with extracellular ligands TULP1 and GAS6. Interacts with PIK3R1; this interaction increases PI3-kinase activity. In terms of processing, autophosphorylated. As to expression, abundant in the brain and lower levels in other tissues.

The protein localises to the cell membrane. It catalyses the reaction L-tyrosyl-[protein] + ATP = O-phospho-L-tyrosyl-[protein] + ADP + H(+). Functionally, receptor tyrosine kinase that transduces signals from the extracellular matrix into the cytoplasm by binding to several ligands including TULP1 or GAS6. Regulates many physiological processes including cell survival, migration and differentiation. Ligand binding at the cell surface induces dimerization and autophosphorylation of TYRO3 on its intracellular domain that provides docking sites for downstream signaling molecules. Following activation by ligand, interacts with PIK3R1 and thereby enhances PI3-kinase activity. Activates the AKT survival pathway, including nuclear translocation of NF-kappa-B and up-regulation of transcription of NF-kappa-B-regulated genes. TYRO3 signaling plays a role in various processes such as neuron protection from excitotoxic injury, platelet aggregation and cytoskeleton reorganization. Also plays an important role in inhibition of Toll-like receptors (TLRs)-mediated innate immune response by activating STAT1, which selectively induces production of suppressors of cytokine signaling SOCS1 and SOCS3. The sequence is that of Tyrosine-protein kinase receptor TYRO3 (Tyro3) from Mus musculus (Mouse).